Here is a 270-residue protein sequence, read N- to C-terminus: L-fucose dehydrogenase (270 aa).

NAD(+) contacts are provided by R19, I21, D40, K41, D62, V63, N89, Y154, K158, I187, T189, and L191.

This sequence belongs to the short-chain dehydrogenases/reductases (SDR) family.

The enzyme catalyses L-fucose + NAD(+) = L-fucono-1,5-lactone + NADH + H(+). It catalyses the reaction D-arabinose + NAD(+) = D-arabinono-1,5-lactone + NADH + H(+). The catalysed reaction is L-galactose + NAD(+) = L-galactono-1,5-lactone + NADH + H(+). Functionally, catalyzes the NAD(+)-dependent oxidation of L-fucose, yielding L-fucono-1,5-lactone, which rapidly converts spontaneously to L-fucone-1,4-lactone. Does not use NADPH. Displays low activity on L-fucose, D-arabinose and L-galactose compared with rabbit and human. This is consitent with the low L-fucose metabolism observed in this species. The sequence is that of L-fucose dehydrogenase (Hsd17b14) from Rattus norvegicus (Rat).